A 101-amino-acid polypeptide reads, in one-letter code: Small ribosomal subunit protein uS10 (101 aa).

It belongs to the universal ribosomal protein uS10 family. In terms of assembly, part of the 30S ribosomal subunit.

Functionally, involved in the binding of tRNA to the ribosomes. The chain is Small ribosomal subunit protein uS10 from Parabacteroides distasonis (strain ATCC 8503 / DSM 20701 / CIP 104284 / JCM 5825 / NCTC 11152).